A 355-amino-acid polypeptide reads, in one-letter code: Protein RecA (355 aa).

ATP is bound at residue 72-79; it reads GPESSGKT.

This sequence belongs to the RecA family.

The protein localises to the cytoplasm. Functionally, can catalyze the hydrolysis of ATP in the presence of single-stranded DNA, the ATP-dependent uptake of single-stranded DNA by duplex DNA, and the ATP-dependent hybridization of homologous single-stranded DNAs. It interacts with LexA causing its activation and leading to its autocatalytic cleavage. This chain is Protein RecA, found in Wolbachia sp. subsp. Drosophila simulans (strain wRi).